A 38-amino-acid chain; its full sequence is Large ribosomal subunit protein bL36 (38 aa).

This sequence belongs to the bacterial ribosomal protein bL36 family.

The chain is Large ribosomal subunit protein bL36 from Mycoplasma mobile (strain ATCC 43663 / 163K / NCTC 11711) (Mesomycoplasma mobile).